A 912-amino-acid chain; its full sequence is uncharacterized protein (912 aa).

Basic and acidic residues-rich tracts occupy residues 20–32 (IERLREQGRAEPA) and 39–67 (HEYEHTQGSRSHSSKDGSRKDRMSSEDKT). Residues 20–91 (IERLREQGRA…KPTLPQPETD (72 aa)) are disordered. Over residues 68–77 (RHKKLKHRSR) the composition is skewed to basic residues.

This is an uncharacterized protein from Penicillium chrysogenum virus (isolate Caston/2003) (PcV).